A 318-amino-acid polypeptide reads, in one-letter code: NF-kappa-B inhibitor alpha (318 aa).

The interval 1-44 (MLSAHRPAEPPAVEGCEPPRKERQGGLLPPDDRHDSGLDSMKEE) is disordered. The span at 17–44 (EPPRKERQGGLLPPDDRHDSGLDSMKEE) shows a compositional bias: basic and acidic residues. Lysine 21 is covalently cross-linked (Glycyl lysine isopeptide (Lys-Gly) (interchain with G-Cter in ubiquitin)). Phosphoserine; by IKKA and IKKB is present on serine 36. Serine 40 is subject to Phosphoserine; by IKKA, IKKB and IKKE. Tyrosine 46 carries the post-translational modification Phosphotyrosine; by Tyr-kinases. ANK repeat units lie at residues 114 to 143 (LSQTPLHLAVITDQAEIAEHLLKAGCDLDV), 147 to 176 (RGNTPLHIACQQGSLRSVSVLTQHCQPHHL), 186 to 215 (NGHTCLHLASIQGYLAVVEYLLSLGADVNA), and 220 to 249 (NGRTALHLAVDLQNSDLVSLLVKHGPDVNK).

This sequence belongs to the NF-kappa-B inhibitor family. In terms of processing, phosphorylated at Ser-36 and Ser-40 by IKKA/CHUK and IKKB/IKBKB; disables inhibition of NF-kappa-B DNA-binding activity. Phosphorylation at positions 36 and 40 is prerequisite to polyubiquitination and subsequent degradation. Monoubiquitinated at Lys-21 following phosphorylation at Ser-36 and Ser-40. The resulting polyubiquitination leads to protein degradation. Post-translationally, hydroxylated by HIF1AN. Highly expressed in lymph node, thymus followed by liver, brain, muscle, kidney, gastrointestinal and reproductive tract.

Its subcellular location is the cytoplasm. It is found in the nucleus. Its function is as follows. Inhibits the activity of dimeric NF-kappa-B/REL complexes by trapping REL (RELA/p65 and NFKB1/p50) dimers in the cytoplasm by masking their nuclear localization signals. On cellular stimulation by immune and pro-inflammatory responses, becomes phosphorylated promoting ubiquitination and degradation, enabling the dimeric RELA to translocate to the nucleus and activate transcription. This chain is NF-kappa-B inhibitor alpha (NFKBIA), found in Gallus gallus (Chicken).